The following is a 73-amino-acid chain: Pelophylaxin-1 (73 aa).

Residues 1–22 (MFTMKKSLLLVFFLGTIALSLC) form the signal peptide. Residues 23 to 41 (EEERGADDDNGGEITDEEI) constitute a propeptide that is removed on maturation. A disulfide bridge links Cys67 with Cys73.

In terms of tissue distribution, expressed by the skin glands.

The protein resides in the secreted. Its function is as follows. Antimicrobial peptide. This Pelophylax fukienensis (Fukien gold-striped pond frog) protein is Pelophylaxin-1.